A 480-amino-acid polypeptide reads, in one-letter code: Probable glycine dehydrogenase (decarboxylating) subunit 2 (480 aa).

An N6-(pyridoxal phosphate)lysine modification is found at lysine 265.

It belongs to the GcvP family. C-terminal subunit subfamily. In terms of assembly, the glycine cleavage system is composed of four proteins: P, T, L and H. In this organism, the P 'protein' is a heterodimer of two subunits. It depends on pyridoxal 5'-phosphate as a cofactor.

The enzyme catalyses N(6)-[(R)-lipoyl]-L-lysyl-[glycine-cleavage complex H protein] + glycine + H(+) = N(6)-[(R)-S(8)-aminomethyldihydrolipoyl]-L-lysyl-[glycine-cleavage complex H protein] + CO2. Its function is as follows. The glycine cleavage system catalyzes the degradation of glycine. The P protein binds the alpha-amino group of glycine through its pyridoxal phosphate cofactor; CO(2) is released and the remaining methylamine moiety is then transferred to the lipoamide cofactor of the H protein. The polypeptide is Probable glycine dehydrogenase (decarboxylating) subunit 2 (Thermosipho africanus (strain TCF52B)).